The primary structure comprises 171 residues: Regulatory protein RecX (171 aa).

This sequence belongs to the RecX family.

The protein localises to the cytoplasm. Its function is as follows. Modulates RecA activity. In Mycobacterium leprae (strain Br4923), this protein is Regulatory protein RecX.